The sequence spans 273 residues: Bifunctional protein FolD (273 aa).

Residues 149–151 and Val-215 each bind NADP(+); that span reads GLG.

The protein belongs to the tetrahydrofolate dehydrogenase/cyclohydrolase family. Homodimer.

It carries out the reaction (6R)-5,10-methylene-5,6,7,8-tetrahydrofolate + NADP(+) = (6R)-5,10-methenyltetrahydrofolate + NADPH. The enzyme catalyses (6R)-5,10-methenyltetrahydrofolate + H2O = (6R)-10-formyltetrahydrofolate + H(+). It functions in the pathway one-carbon metabolism; tetrahydrofolate interconversion. In terms of biological role, catalyzes the oxidation of 5,10-methylenetetrahydrofolate to 5,10-methenyltetrahydrofolate and then the hydrolysis of 5,10-methenyltetrahydrofolate to 10-formyltetrahydrofolate. The sequence is that of Bifunctional protein FolD from Mycoplasma genitalium (strain ATCC 33530 / DSM 19775 / NCTC 10195 / G37) (Mycoplasmoides genitalium).